The sequence spans 169 residues: Lutropin/choriogonadotropin subunit beta (169 aa).

Residues 1–20 (MEMLQGLLLWMLLSVGGVWA) form the signal peptide. 6 disulfide bridges follow: Cys29–Cys77, Cys43–Cys92, Cys46–Cys130, Cys54–Cys108, Cys58–Cys110, and Cys113–Cys120. N-linked (GlcNAc...) asparagine glycosylation is present at Asn33. The segment at 131–169 (APQASSSSKDPPSQPLTSTSTPTPGASNRSSHPLPIKTS) is disordered. Low complexity predominate over residues 145 to 154 (PLTSTSTPTP). Polar residues predominate over residues 155-169 (GASNRSSHPLPIKTS). An N-linked (GlcNAc...) asparagine glycan is attached at Asn158.

The protein belongs to the glycoprotein hormones subunit beta family. Heterodimer of a common alpha chain and a unique beta chain which confers biological specificity to thyrotropin, lutropin, follitropin and gonadotropin.

Its subcellular location is the secreted. Promotes spermatogenesis and ovulation by stimulating the testes and ovaries to synthesize steroids. This Equus quagga burchellii (Burchell's zebra) protein is Lutropin/choriogonadotropin subunit beta (LHB).